A 255-amino-acid chain; its full sequence is GTP cyclohydrolase III 1 (255 aa).

The protein belongs to the archaeal-type GTP cyclohydrolase family.

The catalysed reaction is GTP + 3 H2O = 2-amino-5-formylamino-6-(5-phospho-D-ribosylamino)pyrimidin-4(3H)-one + 2 phosphate + 2 H(+). Catalyzes the formation of 2-amino-5-formylamino-6-ribofuranosylamino-4(3H)-pyrimidinone ribonucleotide monophosphate and inorganic phosphate from GTP. Also has an independent pyrophosphate phosphohydrolase activity. This is GTP cyclohydrolase III 1 (gch31) from Halobacterium salinarum (strain ATCC 700922 / JCM 11081 / NRC-1) (Halobacterium halobium).